We begin with the raw amino-acid sequence, 89 residues long: Small ribosomal subunit protein bS20 (89 aa).

This sequence belongs to the bacterial ribosomal protein bS20 family.

Its function is as follows. Binds directly to 16S ribosomal RNA. The polypeptide is Small ribosomal subunit protein bS20 (Wolbachia sp. subsp. Drosophila simulans (strain wRi)).